Here is a 188-residue protein sequence, read N- to C-terminus: Selenoprotein S B (188 aa).

The helical transmembrane segment at 29–49 (EALSNYGWYILLGCIVIYFLI) threads the bilayer. Basic and acidic residues predominate over residues 116–125 (TWDRMQEGKS). Residues 116–188 (TWDRMQEGKS…RGPSSGGSUG (73 aa)) are disordered. A compositionally biased stretch (low complexity) spans 136 to 147 (ASPRTSTSSSAP). Sec187 is a non-standard amino acid (selenocysteine).

It belongs to the selenoprotein S family.

The protein resides in the endoplasmic reticulum membrane. It is found in the cytoplasm. Involved in the degradation process of misfolded endoplasmic reticulum (ER) luminal proteins. Participates in the transfer of misfolded proteins from the ER to the cytosol, where they are destroyed by the proteasome in a ubiquitin-dependent manner. This Xenopus laevis (African clawed frog) protein is Selenoprotein S B (vimp-b).